The following is a 352-amino-acid chain: Serine protease 55 (352 aa).

The first 18 residues, 1-18, serve as a signal peptide directing secretion; it reads MLLFSVLLLLSLVTGTQL. The Peptidase S1 domain maps to 68 to 300; that stretch reads ITGGMEAEVG…YNLWIEKVTQ (233 aa). An intrachain disulfide couples Cys-93 to Cys-109. Active-site charge relay system residues include His-108 and Asp-156. Disulfide bonds link Cys-189/Cys-256, Cys-222/Cys-235, and Cys-246/Cys-276. Asn-240 carries N-linked (GlcNAc...) asparagine glycosylation. Ser-250 functions as the Charge relay system in the catalytic mechanism. A disordered region spans residues 308-330; sequence AEKRRTSVKQKPMGSPVSGVPEP. Positions 319 to 330 are enriched in low complexity; that stretch reads PMGSPVSGVPEP. Ser-325 is lipidated: GPI-anchor amidated serine. The propeptide at 326 to 352 is removed in mature form; the sequence is GVPEPGSPRSWLLLCPLSHVLFRAILY.

It belongs to the peptidase S1 family. As to expression, only detected in testis. Expressed in spermatogonia, spermatocytes, spermatids, Leydig and Sertoli cells. Expressed in prostate cancer and ovarian cancer (at protein level).

It localises to the cell membrane. The protein localises to the cytoplasm. Its subcellular location is the cytosol. Functionally, probable serine protease, which plays a crucial role in the fertility of male mice including sperm migration and sperm-egg interaction. In Homo sapiens (Human), this protein is Serine protease 55 (PRSS55).